A 95-amino-acid polypeptide reads, in one-letter code: Protein TusB (95 aa).

It belongs to the DsrH/TusB family. As to quaternary structure, heterohexamer, formed by a dimer of trimers. The hexameric TusBCD complex contains 2 copies each of TusB, TusC and TusD. The TusBCD complex interacts with TusE.

The protein localises to the cytoplasm. Its function is as follows. Part of a sulfur-relay system required for 2-thiolation of 5-methylaminomethyl-2-thiouridine (mnm(5)s(2)U) at tRNA wobble positions. This Pectobacterium parmentieri protein is Protein TusB.